The following is a 428-amino-acid chain: 3-phosphoshikimate 1-carboxyvinyltransferase (428 aa).

3-phosphoshikimate is bound by residues Lys-21, Ser-22, and Arg-26. Lys-21 is a binding site for phosphoenolpyruvate. Residues Gly-94 and Arg-122 each coordinate phosphoenolpyruvate. Positions 166, 167, 168, 194, 306, and 333 each coordinate 3-phosphoshikimate. Residue Gln-168 coordinates phosphoenolpyruvate. The Proton acceptor role is filled by Asp-306. Phosphoenolpyruvate contacts are provided by Arg-337, Arg-379, and Lys-405.

Belongs to the EPSP synthase family. As to quaternary structure, monomer.

The protein localises to the cytoplasm. The enzyme catalyses 3-phosphoshikimate + phosphoenolpyruvate = 5-O-(1-carboxyvinyl)-3-phosphoshikimate + phosphate. It functions in the pathway metabolic intermediate biosynthesis; chorismate biosynthesis; chorismate from D-erythrose 4-phosphate and phosphoenolpyruvate: step 6/7. Functionally, catalyzes the transfer of the enolpyruvyl moiety of phosphoenolpyruvate (PEP) to the 5-hydroxyl of shikimate-3-phosphate (S3P) to produce enolpyruvyl shikimate-3-phosphate and inorganic phosphate. The chain is 3-phosphoshikimate 1-carboxyvinyltransferase from Clostridium acetobutylicum (strain ATCC 824 / DSM 792 / JCM 1419 / IAM 19013 / LMG 5710 / NBRC 13948 / NRRL B-527 / VKM B-1787 / 2291 / W).